A 262-amino-acid chain; its full sequence is Protein Pcal_0062 (262 aa).

This sequence belongs to the CinA family.

The polypeptide is Protein Pcal_0062 (Pyrobaculum calidifontis (strain DSM 21063 / JCM 11548 / VA1)).